The following is a 477-amino-acid chain: PTS system glucose-specific EIICB component (477 aa).

The 388-residue stretch at 1 to 388 folds into the PTS EIIC type-1 domain; it reads MFKNVFSSLQ…FNLKTPGREE (388 aa). The next 9 helical transmembrane spans lie at 20–40, 51–71, 76–96, 112–132, 152–172, 250–270, 280–300, 304–324, and 354–374; these read VSVL…FTLI, TGGS…ALGF, GVAA…LSAV, NFSD…AYMF, FVPI…SLIW, LSGG…AIWH, IGSI…TEPI, FILV…LSFP, and IFLF…IFYF. The region spanning 399–477 is the PTS EIIB type-1 domain; that stretch reads IEIAPYIVEA…TAIDEYINNI (79 aa). The active-site Phosphocysteine intermediate; for EIIB activity is cysteine 421. Cysteine 421 bears the Phosphocysteine mark.

The protein localises to the cell inner membrane. It catalyses the reaction N(pros)-phospho-L-histidyl-[protein] + D-glucose(out) = D-glucose 6-phosphate(in) + L-histidyl-[protein]. In terms of biological role, the phosphoenolpyruvate-dependent sugar phosphotransferase system (sugar PTS), a major carbohydrate active transport system, catalyzes the phosphorylation of incoming sugar substrates concomitantly with their translocation across the cell membrane. The enzyme II complex composed of PtsG and Crr is involved in glucose transport. The chain is PTS system glucose-specific EIICB component (ptsG) from Buchnera aphidicola subsp. Schizaphis graminum (strain Sg).